Here is a 236-residue protein sequence, read N- to C-terminus: 2,3,4,5-tetrahydropyridine-2,6-dicarboxylate N-acetyltransferase (236 aa).

The protein belongs to the transferase hexapeptide repeat family. DapH subfamily.

The enzyme catalyses (S)-2,3,4,5-tetrahydrodipicolinate + acetyl-CoA + H2O = L-2-acetamido-6-oxoheptanedioate + CoA. The protein operates within amino-acid biosynthesis; L-lysine biosynthesis via DAP pathway; LL-2,6-diaminopimelate from (S)-tetrahydrodipicolinate (acetylase route): step 1/3. Catalyzes the transfer of an acetyl group from acetyl-CoA to tetrahydrodipicolinate. The protein is 2,3,4,5-tetrahydropyridine-2,6-dicarboxylate N-acetyltransferase of Bacillus licheniformis (strain ATCC 14580 / DSM 13 / JCM 2505 / CCUG 7422 / NBRC 12200 / NCIMB 9375 / NCTC 10341 / NRRL NRS-1264 / Gibson 46).